Here is a 201-residue protein sequence, read N- to C-terminus: Dermatopontin (201 aa).

The signal sequence occupies residues 1-18 (MDLSLLWVLLPLVTMAWG). Gln-19 carries the post-translational modification Pyrrolidone carboxylic acid. Tyr-23 is subject to Sulfotyrosine. Tandem repeats lie at residues 26–79 (PYQQ…ACMP), 70–75 (DRQWNY), 80–135 (TPQS…CCRY), and 125–130 (DREWQF). The segment at 26 to 186 (PYQQYHDYSD…AVERDRQWKF (161 aa)) is 2 X 53-55 AA tandem repeats. 5 disulfide bridges follow: Cys-50–Cys-77, Cys-90–Cys-132, Cys-106–Cys-133, Cys-139–Cys-196, and Cys-143–Cys-189. The 3 X 6 AA repeats of D-R-[EQ]-W-[NQK]-[FY] stretch occupies residues 70-186 (DRQWNYACMP…AVERDRQWKF (117 aa)). A sulfotyrosine mark is found at Tyr-162, Tyr-164, Tyr-166, and Tyr-167. A 3-3 repeat occupies 181–186 (DRQWKF). A Sulfotyrosine modification is found at Tyr-194.

It belongs to the dermatopontin family. As to quaternary structure, interacts with TGFB1, DCN and collagen. Post-translationally, sulfated on tyrosine residue(s). As to expression, expressed in fibroblasts, heart, skeletal muscle, brain and pancreas. Expressed at an intermediate level in lung and kidney, and at a low level in liver and placenta. Expressed at a lower level in fibroblasts from hypertrophic scar lesional skin and in fibroblasts from patients with systemic sclerosis than in normal skin fibroblasts.

It localises to the secreted. The protein resides in the extracellular space. Its subcellular location is the extracellular matrix. Its function is as follows. Seems to mediate adhesion by cell surface integrin binding. May serve as a communication link between the dermal fibroblast cell surface and its extracellular matrix environment. Enhances TGFB1 activity. Inhibits cell proliferation. Accelerates collagen fibril formation, and stabilizes collagen fibrils against low-temperature dissociation. The protein is Dermatopontin (DPT) of Homo sapiens (Human).